The primary structure comprises 240 residues: Dihydromonapterin reductase (240 aa).

Residue Y152 is the Proton acceptor of the active site.

This sequence belongs to the short-chain dehydrogenases/reductases (SDR) family. FolM subfamily.

The enzyme catalyses (6S)-5,6,7,8-tetrahydrofolate + NADP(+) = 7,8-dihydrofolate + NADPH + H(+). The catalysed reaction is 7,8-dihydromonapterin + NADPH + H(+) = 5,6,7,8-tetrahydromonapterin + NADP(+). Functionally, catalyzes the reduction of dihydromonapterin to tetrahydromonapterin. Also has lower activity with dihydrofolate. The polypeptide is Dihydromonapterin reductase (folM) (Escherichia coli (strain SMS-3-5 / SECEC)).